Here is an 888-residue protein sequence, read N- to C-terminus: Villin-like protein quail (888 aa).

Residues 307–366 (GVYLLDNYGQSIWLWVGGQAPQADALSAMGNGRAFVKKKKYPDNTLVVRVLEGHEPVEFK) form a Gelsolin-like repeat. One can recognise an HP domain in the interval 823–888 (FDGHKKYPLT…MELKKQFKLF (66 aa)).

The protein belongs to the villin/gelsolin family. Germline specific in adult flies.

In terms of biological role, required for the formation of cytoplasmic actin filament bundles in nurse cells, possibly by regulating both the polymerization and organization of actin filaments. Mutations in quail result in female sterility due to the disruption of cytoplasmic transport from the nurse cells into the oocyte late in oogenesis. This is Villin-like protein quail (qua) from Drosophila melanogaster (Fruit fly).